Consider the following 286-residue polypeptide: Probable glucose uptake protein GlcU (286 aa).

10 helical membrane passes run 4 to 22 (IFLAILPAIFWGSIVLFNV), 27 to 49 (GPYSQTLGTTFGALIFSIVVYIF), 53 to 72 (VLTPTVIGVGVVSGLFWALG), 85 to 107 (VSRTMPISTGLQLVATTLFGVIV), 111 to 133 (WSTTISVVLGILALVCIIIGVIL), 154 to 176 (IVILLISTVGYLVYVVVIRLFNV), 181 to 198 (ALLPQAVGMVLGGILLTF), 211 to 228 (IIPGLIWAAGNMFLFISQ), 233 to 255 (VATSFSLSQMGIIISTLGGILIL), and 267 to 284 (IVVGIVFIIAAGIMLGIA).

The protein belongs to the GRP transporter (TC 2.A.7.5) family.

The protein resides in the cell membrane. In terms of biological role, involved in the uptake of glucose. This is Probable glucose uptake protein GlcU (glcU) from Bacillus cereus (strain ATCC 14579 / DSM 31 / CCUG 7414 / JCM 2152 / NBRC 15305 / NCIMB 9373 / NCTC 2599 / NRRL B-3711).